A 339-amino-acid chain; its full sequence is tRNA-specific 2-thiouridylase MnmA (339 aa).

ATP-binding positions include 8–15 (AMSGGVDS) and methionine 34. Residue cysteine 94 is the Nucleophile of the active site. An intrachain disulfide couples cysteine 94 to cysteine 188. Residue glycine 118 coordinates ATP. The segment at 136 to 138 (KDQ) is interaction with tRNA. The active-site Cysteine persulfide intermediate is cysteine 188. The segment at 290-291 (RY) is interaction with tRNA.

This sequence belongs to the MnmA/TRMU family.

Its subcellular location is the cytoplasm. It carries out the reaction S-sulfanyl-L-cysteinyl-[protein] + uridine(34) in tRNA + AH2 + ATP = 2-thiouridine(34) in tRNA + L-cysteinyl-[protein] + A + AMP + diphosphate + H(+). Functionally, catalyzes the 2-thiolation of uridine at the wobble position (U34) of tRNA, leading to the formation of s(2)U34. This chain is tRNA-specific 2-thiouridylase MnmA, found in Nitratiruptor sp. (strain SB155-2).